A 673-amino-acid chain; its full sequence is Vasorin (673 aa).

The signal sequence occupies residues 1–24 (MHSRSCLPPLLLLLLVLLGSGVQG). One can recognise an LRRNT domain in the interval 25–53 (CPSGCQCNQPQTVFCTARQGTTVPRDVPP). Residues 25-576 (CPSGCQCNQP…VTQAREGNLP (552 aa)) are Extracellular-facing. 10 LRR repeats span residues 54–75 (DTVGLYIFENGITTLDVGCFAG), 78–99 (GLQLLDLSQNQITSLPGGIFQP), 102–123 (NLSNLDLTANKLHEISNETFRG), 126–147 (RLERLYLGKNRIRHIQPGAFDA), 150–170 (RLLELKLPDNELRVLPPLHLP), 171–192 (RLLLLDLSHNSIPALEAGILDT), 194–215 (NVEALRLAGLGLRQLDEGLFGR), 218–239 (NLHDLDVSDNQLEHMPSVIQGL), 241–265 (GLTRLRLAGNTRIAQIRPEDLAGLT), and 266–288 (ALQELDVSNLSLQALPSDLSSLF). N-linked (GlcNAc...) asparagine glycosylation is found at Asn102 and Asn118. N-linked (GlcNAc...) asparagine glycosylation is present at Asn274. In terms of domain architecture, LRRCT spans 299 to 352 (NPFNCLCPLSWFGPWVRENHVVLASPEETRCHFPPKNAGRLLLDLDYADFGCPV). Positions 369-389 (PTLSTSSQAPTWPSLTEPTTQ) are disordered. Polar residues predominate over residues 370–389 (TLSTSSQAPTWPSLTEPTTQ). Positions 406 to 443 (QPQDCPASICLNGGSCRLGARHHWECLCPEGFIGLYCE) constitute an EGF-like domain. Intrachain disulfides connect Cys410/Cys421, Cys415/Cys431, and Cys433/Cys442. The 97-residue stretch at 463-559 (PLLPLSIEPV…ACGEANTSQA (97 aa)) folds into the Fibronectin type-III domain. 3 N-linked (GlcNAc...) asparagine glycosylation sites follow: Asn501, Asn529, and Asn555. The helical transmembrane segment at 577 to 597 (LLIAPALAAVLLAVLAAAGAA) threads the bilayer. The Cytoplasmic segment spans residues 598–673 (YCVRRARATS…QGVLPAKHYI (76 aa)). The disordered stretch occupies residues 608–648 (TAQDKGQVGPGTGPLELEGVKAPLEPGSKATEGGGEALSGG).

Interacts with TGFB1, TGFB2 and TGFB3. Post-translationally, N-glycosylated.

Its subcellular location is the membrane. Functionally, may act as an inhibitor of TGF-beta signaling. In Mus musculus (Mouse), this protein is Vasorin (Vasn).